The chain runs to 221 residues: Protein myomaker (221 aa).

At 1 to 3 (MGT) the chain is on the extracellular side. Residues 4 to 24 (LVAKLLLPTLSSLAFLPTVSI) traverse the membrane as a helical segment. Residues 25–34 (AAKRRFHMEA) lie on the Cytoplasmic side of the membrane. Residues 35 to 55 (MVYLFTLFFVALHHACNGPGL) traverse the membrane as a helical segment. Topologically, residues 56–64 (SVLCFMRHD) are extracellular. Residues 65–85 (ILEYFSVYGTALSMWVSLMAL) form a helical membrane-spanning segment. The Cytoplasmic segment spans residues 86 to 92 (ADFDEPK). A helical membrane pass occupies residues 93–110 (RSTFVMFGVLTIAVRIYH). Topologically, residues 111–113 (DRW) are extracellular. The helical transmembrane segment at 114–134 (GYGVYSGPIGTAILIIAAKWL) threads the bilayer. Residues 135–153 (QKMKEKKGLYPDKSVYTQQ) lie on the Cytoplasmic side of the membrane. A helical membrane pass occupies residues 154-174 (IGPGLCFGALALMLRFFFEDW). A topological domain (extracellular) is located at residue Asp-175. A helical membrane pass occupies residues 176-196 (YTYVHSFYHCALAMSFVLLLP). The Cytoplasmic segment spans residues 197-221 (KVNKKAGSPGTPAKLDCSTLCCACV). 2 S-palmitoyl cysteine lipidation sites follow: Cys-217 and Cys-218.

This sequence belongs to the TMEM8 family. Interacts with MYMX. Palmitoylated at the C-terminus; palmitoylation promotes localization to the Golgi apparatus.

It is found in the cell membrane. Its subcellular location is the golgi apparatus membrane. In terms of biological role, myoblast-specific protein that mediates myoblast fusion, an essential step for the formation of multi-nucleated muscle fibers. Actively participates in the membrane fusion reaction by mediating the mixing of cell membrane lipids (hemifusion) upstream of MYMX. Acts independently of MYMX. Involved in skeletal muscle regeneration in response to injury by mediating the fusion of satellite cells, a population of muscle stem cells, with injured myofibers. Also involved in skeletal muscle hypertrophy, probably by mediating the fusion of satellite cells with myofibers. The sequence is that of Protein myomaker from Homo sapiens (Human).